We begin with the raw amino-acid sequence, 92 residues long: uncharacterized protein (92 aa).

Belongs to the IUNH family.

This is an uncharacterized protein from Corynebacterium ammoniagenes (Brevibacterium ammoniagenes).